We begin with the raw amino-acid sequence, 913 residues long: Polyribonucleotide nucleotidyltransferase (913 aa).

Residues 407–427 (YMHNYEMPPYSTGETGRVGSP) form a disordered region. Positions 521 and 527 each coordinate Mg(2+). One can recognise a KH domain in the interval 587-646 (PRIITTSVPVEKIGEVIGPKGKMINQIQEDTGAEIAIEDDGTVFISSEGGEAAEKAKAII). One can recognise an S1 motif domain in the interval 658 to 730 (GETYNGKVVK…DRGKISLAIP (73 aa)). The disordered stretch occupies residues 727 to 913 (LAIPGFEDQE…VRRDFDPFED (187 aa)). Basic and acidic residues-rich tracts occupy residues 742–789 (SRGD…RRSD), 797–865 (DRPR…DRRG), and 872–898 (RGSDRNPRYATDDNYDDYRADREERTE).

This sequence belongs to the polyribonucleotide nucleotidyltransferase family. Requires Mg(2+) as cofactor.

It is found in the cytoplasm. It carries out the reaction RNA(n+1) + phosphate = RNA(n) + a ribonucleoside 5'-diphosphate. Involved in mRNA degradation. Catalyzes the phosphorolysis of single-stranded polyribonucleotides processively in the 3'- to 5'-direction. The chain is Polyribonucleotide nucleotidyltransferase from Bifidobacterium longum (strain DJO10A).